A 2513-amino-acid polypeptide reads, in one-letter code: Polyprotein P1234 (2513 aa).

The Alphavirus-like MT domain occupies Glu28–His259. The nsP1 membrane-binding stretch occupies residues Gly244–Val263. 2 S-palmitoyl cysteine; by host lipidation sites follow: Cys417 and Cys419. The (+)RNA virus helicase ATP-binding domain occupies Asp690–Lys842. Gly721–Ser728 contacts a ribonucleoside 5'-triphosphate. The 149-residue stretch at Ser843–Ser991 folds into the (+)RNA virus helicase C-terminal domain. Residues Asp1004–Leu1327 form the Peptidase C9 domain. Positions Thr1005–Thr1024 are nucleolus localization signal. Cys1013 serves as the catalytic For cysteine protease nsP2 activity. The Nuclear export signal motif lies at Thr1058 to Ser1067. The For cysteine protease nsP2 activity role is filled by His1083. The Nuclear localization signal signature appears at Pro1182–Val1186. Asp1343, Asn1357, Gly1365, Gly1445, Val1446, and Tyr1447 together coordinate ADP-D-ribose. Residues Cys1595, Cys1597, Cys1620, and Cys1638 each coordinate Zn(2+). Short sequence motifs (FGDF; binding to host G3BP1) lie at residues Phe1851 to Phe1854 and Phe1869 to Phe1872. Positions Asp2267–Ala2382 constitute a RdRp catalytic domain.

In terms of assembly, interacts with non-structural protein 3. Interacts with RNA-directed RNA polymerase nsP4. Interacts with protease nsP2. interacts with itself. Interacts with mRNA-capping enzyme nsP1. Interacts with host DDX1. Interacts with host DDX3. Interacts (via C-terminus) with host G3BP1; this interaction inhibits the formation of host stress granules on viral mRNAs and the nsp3-G3BP1 complexes bind viral RNAs and probably orchestrate the assembly of viral replication complexes. Interacts (via C-terminus) with host G3BP2; this interaction inhibits the formation of host stress granules on viral mRNAs and the nsp3-G3BP2 complexes bind viral RNAs and probably orchestrate the assembly of viral replication complexes. As to quaternary structure, interacts with mRNA-capping enzyme nsP1. Interacts with protease nsP2. interacts with itself. In terms of assembly, interacts with RNA-directed RNA polymerase nsP4. Interacts with mRNA-capping enzyme nsP1. Interacts with KPNA1/karyopherin-alpha1; this interaction probably allows the active transport of protease nsP2 into the host nucleus. Mg(2+) is required as a cofactor. Mn(2+) serves as cofactor. Specific enzymatic cleavages in vivo yield mature proteins. The processing of the polyprotein is temporally regulated. In early stages (1.7 hpi), P1234 is first cleaved in trans through its nsP2 protease activity, releasing P123' and nsP4, which associate to form the early replication complex. At the same time, P1234 is also cut at the nsP1/nsP2 site early in infection but with lower efficiency. After replication of the viral minus-strand RNAs (4 hpi), the polyproteins are cut at the nsP1/nsP2 and nsP2/nsP3 sites very efficiently, preventing accumulation of P123' and P1234 and allowing the formation of the late replication complex. NsP3'/nsP4 site is not cleaved anymore and P34 is produced rather than nsP4. Post-translationally, specific enzymatic cleavages in vivo yield mature proteins. The processing of the polyprotein is temporally regulated. In early stages (1.7 hpi), P123 is cleaved at the nsP1/nsP2 site with low efficiency. After replication of the viral minus-strand RNAs (4 hpi), the polyproteins are cut at the nsP1/nsP2 and nsP2/nsP3 sites very efficiently, preventing accumulation of P123 and allowing the formation of the late replication complex. In terms of processing, specific enzymatic cleavages in vivo yield mature proteins. The processing of the polyprotein is temporally regulated. In early stages (1.7 hpi), P123 is cleaved at the nsP1/nsP2 site with low efficiency. After replication of the viral minus-strand RNAs (4 hpi), the polyproteins are cut at the nsP1/nsP2 and nsP2/nsP3 sites very efficiently, preventing accumulation of P123' and allowing the formation of the late replication complex. Palmitoylated by host palmitoyltransferases ZDHHC2 and ZDHHC19. Post-translationally, phosphorylated by host on serines and threonines. In terms of processing, ubiquitinated; targets the protein for rapid degradation via the ubiquitin system. Nsp4 is present in extremely low quantities due to low frequency of translation through the amber stop-codon and the degradation by the ubiquitin pathway.

It localises to the host cytoplasmic vesicle membrane. The protein resides in the host cell membrane. It is found in the host cell projection. The protein localises to the host filopodium. Its subcellular location is the host nucleus. It localises to the host cytoplasm. It catalyses the reaction GTP + S-adenosyl-L-methionine = N(7)-methyl-GTP + S-adenosyl-L-homocysteine. The catalysed reaction is N(7)-methyl-GTP + L-histidyl-[protein] = N(tele)-(N(7)-methylguanosine 5'-phospho)-L-histidyl-[protein] + diphosphate. It carries out the reaction N(tele)-(N(7)-methylguanosine 5'-phospho)-L-histidyl-[protein] + a 5'-end diphospho-(purine-ribonucleoside) in mRNA + H(+) = a 5'-end (N(7)-methyl 5'-triphosphoguanosine)-(purine-ribonucleoside) in mRNA + L-histidyl-[protein]. The enzyme catalyses a 5'-end triphospho-ribonucleoside in mRNA + H2O = a 5'-end diphospho-ribonucleoside in mRNA + phosphate + H(+). It catalyses the reaction a ribonucleoside 5'-triphosphate + H2O = a ribonucleoside 5'-diphosphate + phosphate + H(+). The catalysed reaction is ATP + H2O = ADP + phosphate + H(+). It carries out the reaction RNA(n) + a ribonucleoside 5'-triphosphate = RNA(n+1) + diphosphate. The enzyme catalyses 4-O-(ADP-D-ribosyl)-L-aspartyl-[protein] + H2O = L-aspartyl-[protein] + ADP-D-ribose + H(+). It catalyses the reaction 5-O-(ADP-D-ribosyl)-L-glutamyl-[protein] + H2O = L-glutamyl-[protein] + ADP-D-ribose + H(+). The catalysed reaction is RNA(n) + ATP = RNA(n)-3'-adenine ribonucleotide + diphosphate. It carries out the reaction ADP-alpha-D-ribose 1''-phosphate + H2O = ADP-D-ribose + phosphate. Inactive precursor of the viral replicase, which is activated by cleavages carried out by the viral protease nsP2. In terms of biological role, the early replication complex formed by the polyprotein P123' and nsP4 synthesizes minus-strand RNAs. Polyprotein P123' is a short-lived polyprotein that accumulates during early stage of infection. As soon P123' is cleaved into mature proteins, the plus-strand RNAs synthesis begins. Functionally, the early replication complex formed by the polyprotein P123 and nsP4 synthesizes minus-strand RNAs. As soon P123 is cleaved into mature proteins, the plus-strand RNAs synthesis begins. Its function is as follows. Cytoplasmic capping enzyme that catalyzes two virus-specific reactions: methyltransferase and nsP1 guanylyltransferase. mRNA-capping is necessary since all viral RNAs are synthesized in the cytoplasm, and host capping enzymes are restricted to the nucleus. The enzymatic reaction involves a covalent link between 7-methyl-GMP and nsP1, whereas eukaryotic capping enzymes form a covalent complex only with GMP. nsP1 capping consists in the following reactions: GTP is first methylated into 7-methyl-GMP and then is covalently linked to nsP1 to form the m7GMp-nsP1 complex from which 7-methyl-GMP complex is transferred to the mRNA to create the cap structure. NsP1 is also needed for the initiation of the minus-strand RNAs synthesis. Probably serves as a membrane anchor for the replication complex composed of nsP1-nsP4. Palmitoylated nsP1 is remodeling host cell cytoskeleton, and induces filopodium-like structure formation at the surface of the host cell. Multifunctional protein whose N-terminus is part of the RNA polymerase complex and displays NTPase, RNA triphosphatase and helicase activities. NTPase and RNA triphosphatase are involved in viral RNA capping and helicase keeps a check on the dsRNA replication intermediates. The C-terminus harbors a protease that specifically cleaves the polyproteins and releases the mature proteins. Required for the shutoff of minus-strand RNAs synthesis. Specifically inhibits the host IFN response by promoting the nuclear export of host STAT1. Also inhibits host transcription by inducing the rapid proteasome-dependent degradation of POLR2A, a catalytic subunit of the RNAPII complex. The resulting inhibition of cellular protein synthesis serves to ensure maximal viral gene expression and to evade host immune response. In terms of biological role, seems to be essential for minus-strand RNAs and subgenomic 26S mRNAs synthesis. Displays mono-ADP-ribosylhydrolase activity. ADP-ribosylation is a post-translational modification that controls various processes of the host cell and the virus probably needs to revert it for optimal viral replication. Binds proteins of FXR family and sequesters them into the viral RNA replication complexes thereby inhibiting the formation of host stress granules on viral mRNAs. The nsp3'-FXR complexes bind viral RNAs and probably orchestrate the assembly of viral replication complexes, thanks to the ability of FXR family members to self-assemble and bind DNA. Functionally, seems to be essential for minus-strand RNAs and subgenomic 26S mRNAs synthesis. Displays mono-ADP-ribosylhydrolase activity. ADP-ribosylation is a post-translational modification that controls various processes of the host cell and the virus probably needs to revert it for optimal viral replication. Binds proteins of G3BP family and sequesters them into the viral RNA replication complexes thereby inhibiting the formation of host stress granules on viral mRNAs. The nsp3-G3BP complexes bind viral RNAs and probably orchestrate the assembly of viral replication complexes, thanks to the ability of G3BP family members to self-assemble and bind DNA. Its function is as follows. RNA dependent RNA polymerase. Replicates genomic and antigenomic RNA by recognizing replications specific signals. The early replication complex formed by the polyprotein P123 and nsP4 synthesizes minus-strand RNAs. The late replication complex composed of fully processed nsP1-nsP4 is responsible for the production of genomic and subgenomic plus-strand RNAs. The chain is Polyprotein P1234 from Anopheles (Human).